A 788-amino-acid chain; its full sequence is Spastin (788 aa).

The segment at 1–105 (MVRTKNQSSS…PRSAGGPSSV (105 aa)) is disordered. Topologically, residues 1–116 (MVRTKNQSSS…KQNLYVVSFP (116 aa)) are cytoplasmic. Residues 1–227 (MVRTKNQSSS…NRSGSGYSPG (227 aa)) are required for localization to punctate cytoplasmic foci. Composition is skewed to low complexity over residues 8–48 (SSSS…SSHR) and 57–75 (ATNV…SSPD). The segment at residues 117–137 (IIFLFNVLRSLIYQLFCIFRY) is an intramembrane region (helical). The Cytoplasmic portion of the chain corresponds to 138 to 788 (LYGASTKVIY…WSSDYGDITI (651 aa)). Residues 227–788 (GPGDPLLAKQ…WSSDYGDITI (562 aa)) are sufficient for interaction with microtubules and microtubule severing. One can recognise an MIT domain in the interval 240 to 315 (HRRAFEYISK…SMARDRLHFL (76 aa)). Residues 330–353 (KEEQKPNPSREQHQKPQKAREAAD) show a composition bias toward basic and acidic residues. Residues 330-484 (KEEQKPNPSR…SGSGSGASTP (155 aa)) are disordered. Residues 380-400 (LTTPRISATATTPTSSSSLAS) show a composition bias toward low complexity. 2 stretches are compositionally biased toward polar residues: residues 419 to 433 (NKSQ…SKTS) and 453 to 469 (QFSS…RTPI). Positions 471-485 (NNGASGSGSGASTPV) are required for interaction with microtubules. Residue 553 to 560 (GPPGNGKT) coordinates ATP.

This sequence belongs to the AAA ATPase family. Spastin subfamily. Homohexamer. The homohexamer is stabilized by ATP-binding. The homohexamer may adopt a ring conformation through which microtubules pass prior to being severed. Interacts with microtubules. Interacts with atl; may be involved in microtubule dynamics.

It localises to the membrane. The protein localises to the cytoplasm. It is found in the cytoskeleton. Its subcellular location is the microtubule organizing center. The protein resides in the centrosome. It localises to the chromosome. The protein localises to the lipid droplet. It catalyses the reaction n ATP + n H2O + a microtubule = n ADP + n phosphate + (n+1) alpha/beta tubulin heterodimers.. Its function is as follows. ATP-dependent microtubule severing protein. Stimulates microtubule minus-end depolymerization and poleward microtubule flux in the mitotic spindle. Regulates microtubule stability in the neuromuscular junction synapse. Involved in lipid metabolism by regulating the size and distribution of lipid droplets. Involved in axon regeneration by regulating microtubule severing. This chain is Spastin, found in Drosophila pseudoobscura pseudoobscura (Fruit fly).